The primary structure comprises 381 residues: Queuine tRNA-ribosyltransferase (381 aa).

Asp-96 functions as the Proton acceptor in the catalytic mechanism. Residues Asp-96–Phe-100, Asp-150, Gln-193, and Gly-220 contribute to the substrate site. The interval Gly-251–Ala-257 is RNA binding. Asp-270 serves as the catalytic Nucleophile. Residues Thr-275–Arg-279 form an RNA binding; important for wobble base 34 recognition region. Positions 308, 310, 313, and 339 each coordinate Zn(2+).

Belongs to the queuine tRNA-ribosyltransferase family. As to quaternary structure, homodimer. Within each dimer, one monomer is responsible for RNA recognition and catalysis, while the other monomer binds to the replacement base PreQ1. The cofactor is Zn(2+).

It catalyses the reaction 7-aminomethyl-7-carbaguanine + guanosine(34) in tRNA = 7-aminomethyl-7-carbaguanosine(34) in tRNA + guanine. It functions in the pathway tRNA modification; tRNA-queuosine biosynthesis. In terms of biological role, catalyzes the base-exchange of a guanine (G) residue with the queuine precursor 7-aminomethyl-7-deazaguanine (PreQ1) at position 34 (anticodon wobble position) in tRNAs with GU(N) anticodons (tRNA-Asp, -Asn, -His and -Tyr). Catalysis occurs through a double-displacement mechanism. The nucleophile active site attacks the C1' of nucleotide 34 to detach the guanine base from the RNA, forming a covalent enzyme-RNA intermediate. The proton acceptor active site deprotonates the incoming PreQ1, allowing a nucleophilic attack on the C1' of the ribose to form the product. After dissociation, two additional enzymatic reactions on the tRNA convert PreQ1 to queuine (Q), resulting in the hypermodified nucleoside queuosine (7-(((4,5-cis-dihydroxy-2-cyclopenten-1-yl)amino)methyl)-7-deazaguanosine). The polypeptide is Queuine tRNA-ribosyltransferase (Bacillus velezensis (strain DSM 23117 / BGSC 10A6 / LMG 26770 / FZB42) (Bacillus amyloliquefaciens subsp. plantarum)).